The sequence spans 232 residues: Large ribosomal subunit protein uL1 (232 aa).

It belongs to the universal ribosomal protein uL1 family. In terms of assembly, part of the 50S ribosomal subunit.

In terms of biological role, binds directly to 23S rRNA. The L1 stalk is quite mobile in the ribosome, and is involved in E site tRNA release. Functionally, protein L1 is also a translational repressor protein, it controls the translation of the L11 operon by binding to its mRNA. In Hahella chejuensis (strain KCTC 2396), this protein is Large ribosomal subunit protein uL1.